Here is a 70-residue protein sequence, read N- to C-terminus: MQGVQEQIEELQTKLAFQELTVEELNQEVIKLNRLVAYQQHQIQLLVGKLQAMEPSNIATQAEETPPPHY.

The protein belongs to the SlyX family.

The protein is Protein SlyX homolog of Shewanella putrefaciens (strain CN-32 / ATCC BAA-453).